Reading from the N-terminus, the 161-residue chain is MKKLAIIGATSVMMMTGTAQANFTSSGTNGKVDLTITEECRVTVESKSESFLRSGLVANRHITNLGIQSTGCGTGQRVALKLGAGSYDDTNGAHMTHENGTDKLLVSMGSATGDGTQDGGVYYINRDGNWNGQMVFIVRNDQQHLPTGKYTLNLEGGFWTK.

The first 21 residues, Met-1–Ala-21, serve as a signal peptide directing secretion.

Belongs to the Dr-adhesin family.

It is found in the fimbrium. In terms of biological role, hemagglutinins of uropathogenic E.coli mediate adherence to the upper urinary tract. These adhesins bind to the Dr blood group antigen and also agglutinate human erythrocytes in the presence of D-mannose (mannose-resistant hemagglutination (MRHA)). This chain is Afimbrial adhesin AFA-I (afaE1), found in Escherichia coli.